Here is a 444-residue protein sequence, read N- to C-terminus: DNA primase DnaG (444 aa).

Residues 173 to 250 (DAILIVEGRS…YVTRAPRGLE (78 aa)) form the Toprim domain. 3 residues coordinate Mg(2+): glutamate 179, aspartate 221, and aspartate 223. Residues 302 to 354 (VTSSVNKTDKYSQKNESKQFKQQKNENKQVKDNSKEKTQKSTEKHNETEETHL) form a disordered region. The segment covering 308-354 (KTDKYSQKNESKQFKQQKNENKQVKDNSKEKTQKSTEKHNETEETHL) has biased composition (basic and acidic residues).

It belongs to the archaeal DnaG primase family. In terms of assembly, forms a ternary complex with MCM helicase and DNA. Component of the archaeal exosome complex. Mg(2+) is required as a cofactor.

The enzyme catalyses ssDNA + n NTP = ssDNA/pppN(pN)n-1 hybrid + (n-1) diphosphate.. In terms of biological role, RNA polymerase that catalyzes the synthesis of short RNA molecules used as primers for DNA polymerase during DNA replication. Also part of the exosome, which is a complex involved in RNA degradation. Acts as a poly(A)-binding protein that enhances the interaction between heteromeric, adenine-rich transcripts and the exosome. The polypeptide is DNA primase DnaG (Methanosphaera stadtmanae (strain ATCC 43021 / DSM 3091 / JCM 11832 / MCB-3)).